The following is a 196-amino-acid chain: ATP-dependent Clp protease proteolytic subunit (196 aa).

Ser96 serves as the catalytic Nucleophile. The active site involves His121.

It belongs to the peptidase S14 family. As to quaternary structure, fourteen ClpP subunits assemble into 2 heptameric rings which stack back to back to give a disk-like structure with a central cavity, resembling the structure of eukaryotic proteasomes.

Its subcellular location is the cytoplasm. The enzyme catalyses Hydrolysis of proteins to small peptides in the presence of ATP and magnesium. alpha-casein is the usual test substrate. In the absence of ATP, only oligopeptides shorter than five residues are hydrolyzed (such as succinyl-Leu-Tyr-|-NHMec, and Leu-Tyr-Leu-|-Tyr-Trp, in which cleavage of the -Tyr-|-Leu- and -Tyr-|-Trp bonds also occurs).. Its function is as follows. Cleaves peptides in various proteins in a process that requires ATP hydrolysis. Has a chymotrypsin-like activity. Plays a major role in the degradation of misfolded proteins. This is ATP-dependent Clp protease proteolytic subunit from Streptococcus mutans serotype c (strain ATCC 700610 / UA159).